A 296-amino-acid polypeptide reads, in one-letter code: Phosphatidylglycerol--prolipoprotein diacylglyceryl transferase (296 aa).

Residues 1 to 21 (MRHRRRPGGRSTAGGTPVSQL) form a disordered region. 7 helical membrane-spanning segments follow: residues 34 to 54 (GPLT…VAYI), 72 to 92 (ELCA…HVIT), 108 to 128 (FFIW…GLAI), 136 to 158 (GIRF…AIGR), 195 to 215 (FHPT…FLLW), 227 to 243 (LFTL…FWVE), and 258 to 278 (LNDV…IVLQ). A 1,2-diacyl-sn-glycero-3-phospho-(1'-sn-glycerol) is bound at residue Arg158.

It belongs to the Lgt family.

It is found in the cell membrane. It catalyses the reaction L-cysteinyl-[prolipoprotein] + a 1,2-diacyl-sn-glycero-3-phospho-(1'-sn-glycerol) = an S-1,2-diacyl-sn-glyceryl-L-cysteinyl-[prolipoprotein] + sn-glycerol 1-phosphate + H(+). It functions in the pathway protein modification; lipoprotein biosynthesis (diacylglyceryl transfer). In terms of biological role, catalyzes the transfer of the diacylglyceryl group from phosphatidylglycerol to the sulfhydryl group of the N-terminal cysteine of a prolipoprotein, the first step in the formation of mature lipoproteins. This Cutibacterium acnes (strain DSM 16379 / KPA171202) (Propionibacterium acnes) protein is Phosphatidylglycerol--prolipoprotein diacylglyceryl transferase.